The chain runs to 151 residues: Transcriptional regulator MraZ (151 aa).

2 SpoVT-AbrB domains span residues 5-52 and 81-124; these read ANAI…PLSE and AVDL…DEDA.

It belongs to the MraZ family. As to quaternary structure, forms oligomers.

The protein localises to the cytoplasm. Its subcellular location is the nucleoid. This Pseudomonas syringae pv. tomato (strain ATCC BAA-871 / DC3000) protein is Transcriptional regulator MraZ.